The primary structure comprises 489 residues: Mitochondrial-processing peptidase subunit beta (489 aa).

A mitochondrion-targeting transit peptide spans 1-45 (MAAAALSRTLLPEARRRLWGFTRRLPLRRAAAQPLYFGGDRLRST). H101 is a binding site for Zn(2+). The active-site Proton acceptor is E104. The Zn(2+) site is built by H105 and E181.

The protein belongs to the peptidase M16 family. Heterodimer of PMPCA (alpha) and PMPCB (beta) subunits, forming the mitochondrial processing protease (MPP) in which PMPCA is involved in substrate recognition and binding and PMPCB is the catalytic subunit. Zn(2+) serves as cofactor.

Its subcellular location is the mitochondrion matrix. It carries out the reaction Release of N-terminal transit peptides from precursor proteins imported into the mitochondrion, typically with Arg in position P2.. Its activity is regulated as follows. Binding to PMPCA is required for catalytic activity. Functionally, catalytic subunit of the essential mitochondrial processing protease (MPP), which cleaves the mitochondrial sequence off newly imported precursors proteins. Preferentially, cleaves after an arginine at position P2. Required for PINK1 turnover by coupling PINK1 mitochondrial import and cleavage, which results in subsequent PINK1 proteolysis. The polypeptide is Mitochondrial-processing peptidase subunit beta (Pmpcb) (Mus musculus (Mouse)).